We begin with the raw amino-acid sequence, 499 residues long: Bifunctional purine biosynthesis protein PurH (499 aa).

The 144-residue stretch at 1-144 folds into the MGS-like domain; the sequence is MIKRALISVF…KNFKDVVVLT (144 aa).

It belongs to the PurH family.

The enzyme catalyses (6R)-10-formyltetrahydrofolate + 5-amino-1-(5-phospho-beta-D-ribosyl)imidazole-4-carboxamide = 5-formamido-1-(5-phospho-D-ribosyl)imidazole-4-carboxamide + (6S)-5,6,7,8-tetrahydrofolate. The catalysed reaction is IMP + H2O = 5-formamido-1-(5-phospho-D-ribosyl)imidazole-4-carboxamide. It participates in purine metabolism; IMP biosynthesis via de novo pathway; 5-formamido-1-(5-phospho-D-ribosyl)imidazole-4-carboxamide from 5-amino-1-(5-phospho-D-ribosyl)imidazole-4-carboxamide (10-formyl THF route): step 1/1. Its pathway is purine metabolism; IMP biosynthesis via de novo pathway; IMP from 5-formamido-1-(5-phospho-D-ribosyl)imidazole-4-carboxamide: step 1/1. This chain is Bifunctional purine biosynthesis protein PurH, found in Clostridium botulinum (strain Hall / ATCC 3502 / NCTC 13319 / Type A).